Reading from the N-terminus, the 222-residue chain is Cytidylate kinase (222 aa).

Residue 10 to 18 participates in ATP binding; it reads GPAGAGKST.

The protein belongs to the cytidylate kinase family. Type 1 subfamily.

Its subcellular location is the cytoplasm. It catalyses the reaction CMP + ATP = CDP + ADP. The catalysed reaction is dCMP + ATP = dCDP + ADP. This Halalkalibacterium halodurans (strain ATCC BAA-125 / DSM 18197 / FERM 7344 / JCM 9153 / C-125) (Bacillus halodurans) protein is Cytidylate kinase.